The chain runs to 168 residues: Plastocyanin A, chloroplastic (168 aa).

The transit peptide at 1 to 69 (MATVTSAAVS…SAMIASNAMA (69 aa)) directs the protein to the chloroplast. The 99-residue stretch at 70–168 (IDVLLGADDG…AGMVGKVTVN (99 aa)) folds into the Plastocyanin-like domain. Cu cation-binding residues include histidine 106, cysteine 153, histidine 156, and methionine 161.

It belongs to the plastocyanin family. It depends on Cu(2+) as a cofactor.

It is found in the plastid. Its subcellular location is the chloroplast thylakoid membrane. Its function is as follows. Participates in electron transfer between P700 and the cytochrome b6-f complex in photosystem I. The protein is Plastocyanin A, chloroplastic (PETE) of Populus nigra (Lombardy poplar).